The sequence spans 369 residues: MNYECMTQDGRARRGRIIFDNGQIVQTPVFMPVGTQATVKGLSPEELDALGAEIILGNTFHLMLRPGAEIIQAHGGLHQFMHWQKPILTDSGGFQVFSLAKIRKLTEEGARFRSPIDGREVFLTPEKSIAVQHALNSNIIMQLDECTPYPATYDEAANSMRMSLRWARRSQQAHGDHANHLFGIVQGGIYPDLRQESAQALVELDLPGYAIGGLAVGEPKDAREATLDAVLPFVPKNKPRYLMGVGKPADLVEGVRRGIDMFDCVMPSRNARNAYLFTRFGILKLRNSRYKEDLRPIDETCNCYTCQRYSRSYLHHLDKCNEILGARLNTIHNLYYYVHLMHEMRRAIEEHRFDDFARAFYAEQECGND.

Asp90 (proton acceptor) is an active-site residue. Substrate contacts are provided by residues 90–94 (DSGGF), Asp144, Gln186, and Gly213. Positions 244-250 (GVGKPAD) are RNA binding. Residue Asp263 is the Nucleophile of the active site. Positions 301, 303, 306, and 332 each coordinate Zn(2+).

The protein belongs to the queuine tRNA-ribosyltransferase family. As to quaternary structure, homodimer. Within each dimer, one monomer is responsible for RNA recognition and catalysis, while the other monomer binds to the replacement base PreQ1. It depends on Zn(2+) as a cofactor.

It carries out the reaction 7-aminomethyl-7-carbaguanine + guanosine(34) in tRNA = 7-aminomethyl-7-carbaguanosine(34) in tRNA + guanine. The protein operates within tRNA modification; tRNA-queuosine biosynthesis. Catalyzes the base-exchange of a guanine (G) residue with the queuine precursor 7-aminomethyl-7-deazaguanine (PreQ1) at position 34 (anticodon wobble position) in tRNAs with GU(N) anticodons (tRNA-Asp, -Asn, -His and -Tyr). Catalysis occurs through a double-displacement mechanism. The nucleophile active site attacks the C1' of nucleotide 34 to detach the guanine base from the RNA, forming a covalent enzyme-RNA intermediate. The proton acceptor active site deprotonates the incoming PreQ1, allowing a nucleophilic attack on the C1' of the ribose to form the product. After dissociation, two additional enzymatic reactions on the tRNA convert PreQ1 to queuine (Q), resulting in the hypermodified nucleoside queuosine (7-(((4,5-cis-dihydroxy-2-cyclopenten-1-yl)amino)methyl)-7-deazaguanosine). This Dichelobacter nodosus (strain VCS1703A) protein is Queuine tRNA-ribosyltransferase.